The following is a 492-amino-acid chain: Heat shock factor protein 4 (492 aa).

The DNA-binding element occupies 17-122; sequence VPAFLGKLWA…LLERVRRKVP (106 aa). The segment at 129 to 203 is hydrophobic repeat HR-A/B; it reads SRWRPEDLSR…GPLQTGPSST (75 aa). The interval 245 to 322 is interactions with DUSP26, MAPK1 and MAPK2; sequence LPETTLGLSP…ECDFCVTAPP (78 aa). The interval 263–282 is disordered; it reads SDIPEDSPSPEGHRLSPSGG. A Glycyl lysine isopeptide (Lys-Gly) (interchain with G-Cter in SUMO) cross-link involves residue Lys293. Ser298 bears the Phosphoserine mark. The disordered stretch occupies residues 337-378; it reads GSYSPEGPRSVQQPEPRGPREVPDRGTLGLDRGNRSPESLLP. Residues 364–389 form a hydrophobic repeat HR-C region; it reads LGLDRGNRSPESLLPPMLLRPAPETL.

Belongs to the HSF family. In terms of assembly, homotrimer. Exhibits constitutive DNA binding and forms trimers even in the absence of stress. Interacts with ALKBH4, DUSP26, MAPK1, MAPK2, MAPK8 and MAP kinase p38. Phosphorylated mainly on serine residues. Phosphorylation on Ser-298 promotes sumoylation on Lys-293. In terms of processing, isoform HSF4B is constitutively sumoylated. Sumoylation represses the transcriptional activity and is promoted by phosphorylation on Ser-298. HSFA is not sumoylated. In terms of tissue distribution, preferentially expressed in brain and lung. Also found in the eye. Slightly detected in liver and skeletal muscle. Isoform B is the major species in various tissues.

It is found in the nucleus. In terms of biological role, heat-shock transcription factor that specifically binds heat shock promoter elements (HSE). Required for denucleation and organelle rupture and degradation that occur during eye lens terminal differentiation, when fiber cells that compose the lens degrade all membrane-bound organelles in order to provide lens with transparency to allow the passage of light. In this process, may regulate denucleation of lens fiber cells in part by activating DNASE2B transcription. May be involved in DNA repair through the transcriptional regulation of RAD51. May up-regulate p53/TP53 protein in eye lens fiber cells, possibly through protein stabilization. In the eye lens, controls the expression of alpha-crystallin B chain/CRYAB and consequently may be involved in the regulation of lysosomal acidification. Functionally, transcriptional repressor. Its function is as follows. Transcriptional activator. In Mus musculus (Mouse), this protein is Heat shock factor protein 4 (Hsf4).